The primary structure comprises 206 residues: Large ribosomal subunit protein uL4 (206 aa).

Residues 44–77 (RQGTRAQKDRQTVKHSTKKPWRQKGTGRARAGMT) are disordered. Basic residues predominate over residues 56–70 (VKHSTKKPWRQKGTG).

Belongs to the universal ribosomal protein uL4 family. As to quaternary structure, part of the 50S ribosomal subunit.

Its function is as follows. One of the primary rRNA binding proteins, this protein initially binds near the 5'-end of the 23S rRNA. It is important during the early stages of 50S assembly. It makes multiple contacts with different domains of the 23S rRNA in the assembled 50S subunit and ribosome. In terms of biological role, forms part of the polypeptide exit tunnel. In Methylibium petroleiphilum (strain ATCC BAA-1232 / LMG 22953 / PM1), this protein is Large ribosomal subunit protein uL4.